A 339-amino-acid chain; its full sequence is Tetraacyldisaccharide 4'-kinase (339 aa).

ATP is bound at residue 62–69 (VAGGTGKT).

Belongs to the LpxK family.

The catalysed reaction is a lipid A disaccharide + ATP = a lipid IVA + ADP + H(+). It participates in glycolipid biosynthesis; lipid IV(A) biosynthesis; lipid IV(A) from (3R)-3-hydroxytetradecanoyl-[acyl-carrier-protein] and UDP-N-acetyl-alpha-D-glucosamine: step 6/6. Its function is as follows. Transfers the gamma-phosphate of ATP to the 4'-position of a tetraacyldisaccharide 1-phosphate intermediate (termed DS-1-P) to form tetraacyldisaccharide 1,4'-bis-phosphate (lipid IVA). This is Tetraacyldisaccharide 4'-kinase from Xylella fastidiosa (strain 9a5c).